Here is a 163-residue protein sequence, read N- to C-terminus: NADH-quinone oxidoreductase subunit I (163 aa).

2 consecutive 4Fe-4S ferredoxin-type domains span residues 53-83 and 94-123; these read LRRY…IEAG and VRYD…EGPN. [4Fe-4S] cluster-binding residues include C63, C66, C69, C73, C103, C106, C109, and C113.

This sequence belongs to the complex I 23 kDa subunit family. In terms of assembly, NDH-1 is composed of 14 different subunits. Subunits NuoA, H, J, K, L, M, N constitute the membrane sector of the complex. It depends on [4Fe-4S] cluster as a cofactor.

The protein resides in the cell inner membrane. The enzyme catalyses a quinone + NADH + 5 H(+)(in) = a quinol + NAD(+) + 4 H(+)(out). NDH-1 shuttles electrons from NADH, via FMN and iron-sulfur (Fe-S) centers, to quinones in the respiratory chain. The immediate electron acceptor for the enzyme in this species is believed to be ubiquinone. Couples the redox reaction to proton translocation (for every two electrons transferred, four hydrogen ions are translocated across the cytoplasmic membrane), and thus conserves the redox energy in a proton gradient. The protein is NADH-quinone oxidoreductase subunit I of Brucella anthropi (strain ATCC 49188 / DSM 6882 / CCUG 24695 / JCM 21032 / LMG 3331 / NBRC 15819 / NCTC 12168 / Alc 37) (Ochrobactrum anthropi).